The chain runs to 217 residues: 3-oxoadipate CoA-transferase subunit B (217 aa).

Glu-50 is an active-site residue.

The protein belongs to the 3-oxoacid CoA-transferase subunit B family. Heterodimer.

It carries out the reaction 3-oxoadipate + succinyl-CoA = 3-oxoadipyl-CoA + succinate. It functions in the pathway aromatic compound metabolism; beta-ketoadipate pathway; acetyl-CoA and succinyl-CoA from 3-oxoadipate: step 1/2. This chain is 3-oxoadipate CoA-transferase subunit B (pcaJ), found in Acinetobacter baylyi (strain ATCC 33305 / BD413 / ADP1).